The chain runs to 690 residues: Choline transporter-like 1 (690 aa).

The helical transmembrane segment at 23–43 threads the bilayer; sequence IFWLVLYVVFWIALIVIAVFS. An N-linked (GlcNAc...) asparagine glycan is attached at N134. A run of 4 helical transmembrane segments spans residues 203-223, 237-259, 282-302, and 334-354; these read LYKA…FSIV, WLIC…WSYY, ATIY…LVVI, and LLAF…VVCL. N-linked (GlcNAc...) asparagine glycosylation is present at N391. 4 consecutive transmembrane segments (helical) span residues 415 to 435, 464 to 484, 565 to 585, and 594 to 614; these read IYII…QLAI, LGSV…RLIL, FVLF…SILL, and FYMA…HIIL.

This sequence belongs to the CTL (choline transporter-like) family.

It is found in the membrane. This is Choline transporter-like 1 from Anopheles gambiae (African malaria mosquito).